Here is a 37-residue protein sequence, read N- to C-terminus: NADH dehydrogenase [ubiquinone] 1 alpha subcomplex subunit 5 (37 aa).

The protein belongs to the complex I NDUFA5 subunit family. Complex I is composed of about 45 different subunits.

It localises to the mitochondrion inner membrane. Functionally, accessory subunit of the mitochondrial membrane respiratory chain NADH dehydrogenase (Complex I), that is believed not to be involved in catalysis. Complex I functions in the transfer of electrons from NADH to the respiratory chain. The immediate electron acceptor for the enzyme is believed to be ubiquinone. The sequence is that of NADH dehydrogenase [ubiquinone] 1 alpha subcomplex subunit 5 from Solanum tuberosum (Potato).